A 591-amino-acid polypeptide reads, in one-letter code: Uncoordinated protein 58 (591 aa).

The interval 1-24 (MFFYSPNVAPQPSSTSHRRPTLTH) is disordered. A helical transmembrane segment spans residues 184-204 (VILVSVLIGYLCLGAWILMLL). N-linked (GlcNAc...) asparagine glycosylation is present at Asn226. 5 consecutive transmembrane segments (helical) span residues 289 to 309 (TFPTAILYVLTVLTTCGYGEV), 318 to 338 (VFSVAFALVGIPLMFITAADI), 400 to 420 (PIGAYVSCICIYCSIGSAMFI), 428 to 448 (FIHAFHFGFNLIVTVGLGDIV), and 453 to 473 (IFLSLIVAFVIVGLSVVTMCV).

It belongs to the two pore domain potassium channel (TC 1.A.1.8) family.

It is found in the membrane. Functionally, has a role in mobility, possibly in the transport of potassium in muscles. The polypeptide is Uncoordinated protein 58 (Caenorhabditis elegans).